Here is a 332-residue protein sequence, read N- to C-terminus: Ribosomal RNA small subunit methyltransferase C (332 aa).

This sequence belongs to the methyltransferase superfamily. RsmC family. In terms of assembly, monomer.

It localises to the cytoplasm. It carries out the reaction guanosine(1207) in 16S rRNA + S-adenosyl-L-methionine = N(2)-methylguanosine(1207) in 16S rRNA + S-adenosyl-L-homocysteine + H(+). Functionally, specifically methylates the guanine in position 1207 of 16S rRNA in the 30S particle. This chain is Ribosomal RNA small subunit methyltransferase C, found in Pseudomonas fluorescens (strain ATCC BAA-477 / NRRL B-23932 / Pf-5).